The primary structure comprises 29 residues: Cytochrome b6-f complex subunit 8 (29 aa).

A helical membrane pass occupies residues 3–23; it reads IVSIGWAALMVVFTFSLSLVV.

It belongs to the PetN family. The 4 large subunits of the cytochrome b6-f complex are cytochrome b6, subunit IV (17 kDa polypeptide, PetD), cytochrome f and the Rieske protein, while the 4 small subunits are PetG, PetL, PetM and PetN. The complex functions as a dimer.

It is found in the plastid. The protein resides in the chloroplast thylakoid membrane. In terms of biological role, component of the cytochrome b6-f complex, which mediates electron transfer between photosystem II (PSII) and photosystem I (PSI), cyclic electron flow around PSI, and state transitions. This Zygnema circumcarinatum (Green alga) protein is Cytochrome b6-f complex subunit 8.